The following is an 89-amino-acid chain: Small ribosomal subunit protein bS16 (89 aa).

Belongs to the bacterial ribosomal protein bS16 family.

The polypeptide is Small ribosomal subunit protein bS16 (Anaplasma marginale (strain Florida)).